The sequence spans 303 residues: UDP-N-acetylenolpyruvoylglucosamine reductase (303 aa).

Positions 27 to 207 constitute an FAD-binding PCMH-type domain; the sequence is KVGGISQVFY…TSISQKLQKI (181 aa). The active site involves Arg175. Residue Ser224 is the Proton donor of the active site. Residue Glu294 is part of the active site.

It belongs to the MurB family. FAD serves as cofactor.

It is found in the cytoplasm. It carries out the reaction UDP-N-acetyl-alpha-D-muramate + NADP(+) = UDP-N-acetyl-3-O-(1-carboxyvinyl)-alpha-D-glucosamine + NADPH + H(+). The protein operates within cell wall biogenesis; peptidoglycan biosynthesis. Cell wall formation. The polypeptide is UDP-N-acetylenolpyruvoylglucosamine reductase (Orientia tsutsugamushi (strain Boryong) (Rickettsia tsutsugamushi)).